An 87-amino-acid polypeptide reads, in one-letter code: U3-theraphotoxin-Hhn1a 17 (87 aa).

An N-terminal signal peptide occupies residues 1–24; that stretch reads MVNVKASMFLTFAGLVLLFVVCYA. Residues 25–52 constitute a propeptide that is removed on maturation; sequence SESEEKEFPKEMLSSIFAVDNDFKQEER. Disulfide bonds link Cys54–Cys67, Cys61–Cys72, and Cys66–Cys79.

The protein belongs to the neurotoxin 10 (Hwtx-1) family. 51 (Hntx-8) subfamily. Hntx-8 sub-subfamily. In terms of tissue distribution, expressed by the venom gland.

The protein resides in the secreted. Functionally, ion channel inhibitor. This is U3-theraphotoxin-Hhn1a 17 from Cyriopagopus hainanus (Chinese bird spider).